We begin with the raw amino-acid sequence, 227 residues long: Cytochrome c oxidase subunit 2 (227 aa).

Residues 1–26 (MATWSNLSLQDGASPLMEQLSFFHDH) are Mitochondrial intermembrane-facing. Residues 27–48 (TMIDLLLITMIVGYSLSYMLLT) form a helical membrane-spanning segment. Residues 49–62 (KYTNRNMLHGHLIE) lie on the Mitochondrial matrix side of the membrane. A helical membrane pass occupies residues 63–82 (TIWTALPAITLIFIALPSLR). Residues 83-227 (LLYLLDDSSD…LFIKWLSNMM (145 aa)) are Mitochondrial intermembrane-facing. 6 residues coordinate Cu cation: His-161, Cys-196, Glu-198, Cys-200, His-204, and Met-207. Glu-198 lines the Mg(2+) pocket.

Belongs to the cytochrome c oxidase subunit 2 family. Component of the cytochrome c oxidase (complex IV, CIV), a multisubunit enzyme composed of a catalytic core of 3 subunits and several supernumerary subunits. The complex exists as a monomer or a dimer and forms supercomplexes (SCs) in the inner mitochondrial membrane with ubiquinol-cytochrome c oxidoreductase (cytochrome b-c1 complex, complex III, CIII). Cu cation serves as cofactor.

It is found in the mitochondrion inner membrane. It carries out the reaction 4 Fe(II)-[cytochrome c] + O2 + 8 H(+)(in) = 4 Fe(III)-[cytochrome c] + 2 H2O + 4 H(+)(out). Functionally, component of the cytochrome c oxidase, the last enzyme in the mitochondrial electron transport chain which drives oxidative phosphorylation. The respiratory chain contains 3 multisubunit complexes succinate dehydrogenase (complex II, CII), ubiquinol-cytochrome c oxidoreductase (cytochrome b-c1 complex, complex III, CIII) and cytochrome c oxidase (complex IV, CIV), that cooperate to transfer electrons derived from NADH and succinate to molecular oxygen, creating an electrochemical gradient over the inner membrane that drives transmembrane transport and the ATP synthase. Cytochrome c oxidase is the component of the respiratory chain that catalyzes the reduction of oxygen to water. Electrons originating from reduced cytochrome c in the intermembrane space (IMS) are transferred via the dinuclear copper A center (CU(A)) of subunit 2 and heme A of subunit 1 to the active site in subunit 1, a binuclear center (BNC) formed by heme A3 and copper B (CU(B)). The BNC reduces molecular oxygen to 2 water molecules using 4 electrons from cytochrome c in the IMS and 4 protons from the mitochondrial matrix. This Locusta migratoria (Migratory locust) protein is Cytochrome c oxidase subunit 2 (COII).